A 451-amino-acid polypeptide reads, in one-letter code: Cyclin-dependent kinase 18 (451 aa).

A phosphoserine mark is found at Ser12, Ser51, Ser66, Ser75, and Ser109. One can recognise a Protein kinase domain in the interval Tyr121–Phe402. Residues Leu127–Val135 and Lys150 each bind ATP. Asp242 (proton acceptor) is an active-site residue. Phosphoserine occurs at positions 417 and 420.

It belongs to the protein kinase superfamily. CMGC Ser/Thr protein kinase family. CDC2/CDKX subfamily. In brain, kidney, intestine and at a much lower level, in fetal tissues.

The enzyme catalyses L-seryl-[protein] + ATP = O-phospho-L-seryl-[protein] + ADP + H(+). The catalysed reaction is L-threonyl-[protein] + ATP = O-phospho-L-threonyl-[protein] + ADP + H(+). Functionally, may play a role in signal transduction cascades in terminally differentiated cells. The polypeptide is Cyclin-dependent kinase 18 (Cdk18) (Mus musculus (Mouse)).